Consider the following 317-residue polypeptide: Enoyl-CoA delta isomerase 3, peroxisomal (317 aa).

The ACB domain maps to 1 to 46; it reads MPKPGVFNFVNKATWDARNALGSLPKETARKNYVDLVSSLSSSSEA. The interval 40–60 is disordered; it reads LSSSSEAPSQGKRGADEKARE. Residue 120–124 participates in substrate binding; the sequence is SGNDL. A Microbody targeting signal motif is present at residues 315 to 317; it reads AKL.

This sequence belongs to the enoyl-CoA hydratase/isomerase family. As to expression, expressed at high levels in the kidney. Also detected at very low levels in the duodenum, jejunum, ileum, heart, liver, lung, and brown adipose tissue (at protein level). In the kidney, expression seems to be localized mainly to the proximal tubule.

It is found in the peroxisome. It carries out the reaction a (3Z)-enoyl-CoA = a 4-saturated (2E)-enoyl-CoA. The enzyme catalyses a (3E)-enoyl-CoA = a 4-saturated (2E)-enoyl-CoA. The catalysed reaction is (3E)-nonenoyl-CoA = (2E)-nonenoyl-CoA. Its function is as follows. Catalyzes the isomerization of trans-3-nonenoyl-CoA into trans-2-nonenoyl-CoA. May also have activity towards other enoyl-CoA species. The sequence is that of Enoyl-CoA delta isomerase 3, peroxisomal from Mus musculus (Mouse).